Reading from the N-terminus, the 257-residue chain is Hydroxyacylglutathione hydrolase (257 aa).

Residues His-54, His-56, Asp-58, His-59, His-113, Asp-137, and His-175 each contribute to the Zn(2+) site.

This sequence belongs to the metallo-beta-lactamase superfamily. Glyoxalase II family. Monomer. Zn(2+) is required as a cofactor.

It catalyses the reaction an S-(2-hydroxyacyl)glutathione + H2O = a 2-hydroxy carboxylate + glutathione + H(+). It functions in the pathway secondary metabolite metabolism; methylglyoxal degradation; (R)-lactate from methylglyoxal: step 2/2. Its function is as follows. Thiolesterase that catalyzes the hydrolysis of S-D-lactoyl-glutathione to form glutathione and D-lactic acid. This chain is Hydroxyacylglutathione hydrolase, found in Microcystis aeruginosa (strain NIES-843 / IAM M-2473).